We begin with the raw amino-acid sequence, 379 residues long: Chaperone protein DnaJ (379 aa).

Residues 7–72 (DYYEVLGVDK…KKRSMYDQFG (66 aa)) form the J domain. The CR-type zinc-finger motif lies at 147–225 (GKKAELSYTR…CGGNGLERKK (79 aa)). 8 residues coordinate Zn(2+): cysteine 160, cysteine 163, cysteine 177, cysteine 180, cysteine 199, cysteine 202, cysteine 213, and cysteine 216. CXXCXGXG motif repeat units follow at residues 160-167 (CSECHGTG), 177-184 (CPDCKGTG), 199-206 (CPTCGGEG), and 213-220 (CKKCGGNG).

Belongs to the DnaJ family. As to quaternary structure, homodimer. Requires Zn(2+) as cofactor.

It localises to the cytoplasm. Functionally, participates actively in the response to hyperosmotic and heat shock by preventing the aggregation of stress-denatured proteins and by disaggregating proteins, also in an autonomous, DnaK-independent fashion. Unfolded proteins bind initially to DnaJ; upon interaction with the DnaJ-bound protein, DnaK hydrolyzes its bound ATP, resulting in the formation of a stable complex. GrpE releases ADP from DnaK; ATP binding to DnaK triggers the release of the substrate protein, thus completing the reaction cycle. Several rounds of ATP-dependent interactions between DnaJ, DnaK and GrpE are required for fully efficient folding. Also involved, together with DnaK and GrpE, in the DNA replication of plasmids through activation of initiation proteins. This is Chaperone protein DnaJ from Treponema denticola (strain ATCC 35405 / DSM 14222 / CIP 103919 / JCM 8153 / KCTC 15104).